The following is a 130-amino-acid chain: Fumarate reductase subunit C (130 aa).

3 helical membrane-spanning segments follow: residues 30–50 (EGTS…VFAL), 60–80 (FVSF…LFAA), and 110–130 (IKAL…VALL).

The protein belongs to the FrdC family. In terms of assembly, part of an enzyme complex containing four subunits: a flavoprotein (FrdA), an iron-sulfur protein (FrdB), and two hydrophobic anchor proteins (FrdC and FrdD).

The protein resides in the cell inner membrane. In terms of biological role, two distinct, membrane-bound, FAD-containing enzymes are responsible for the catalysis of fumarate and succinate interconversion; fumarate reductase is used in anaerobic growth, and succinate dehydrogenase is used in aerobic growth. Anchors the catalytic components of the fumarate reductase complex to the cell inner membrane, binds quinones. This chain is Fumarate reductase subunit C, found in Yersinia pseudotuberculosis serotype O:1b (strain IP 31758).